Reading from the N-terminus, the 127-residue chain is Phospholipase A2 homolog otoconin-22 (127 aa).

Residue asparagine 20 is glycosylated (N-linked (GlcNAc...) asparagine). 7 disulfides stabilise this stretch: cysteine 26–cysteine 120, cysteine 28–cysteine 44, cysteine 43–cysteine 99, cysteine 49–cysteine 127, cysteine 50–cysteine 92, cysteine 59–cysteine 85, and cysteine 78–cysteine 90. Asparagine 113 carries N-linked (GlcNAc...) asparagine glycosylation.

Belongs to the phospholipase A2 family. Monomer. Otoconial membrane in the maculae of the saccule and utricle. Otoconia are composites of proteins and inorganic crystals formed in the peripheral portion of the vestibular system of vertebrates. The otoconial membranes contain small crystals of calcium carbonate known as otoliths (ear stones) if there is a single deposit or as otoconia (ear dust) if there are many. Each mineral polymorph of otoconia has a protein unique to that polymorph.

It is found in the secreted. In terms of biological role, major protein of the aragonitic otoconia. It is unlikely that this protein has phospholipase A2 activity. The sequence is that of Phospholipase A2 homolog otoconin-22 from Xenopus laevis (African clawed frog).